The chain runs to 239 residues: Ribosomal RNA small subunit methyltransferase G (239 aa).

S-adenosyl-L-methionine contacts are provided by residues Gly78, Phe83, 129-130 (AE), and Arg148.

The protein belongs to the methyltransferase superfamily. RNA methyltransferase RsmG family.

It localises to the cytoplasm. In terms of biological role, specifically methylates the N7 position of a guanine in 16S rRNA. The polypeptide is Ribosomal RNA small subunit methyltransferase G (Clostridium botulinum (strain 657 / Type Ba4)).